The sequence spans 482 residues: Probable glycine dehydrogenase (decarboxylating) subunit 2 (482 aa).

K269 is subject to N6-(pyridoxal phosphate)lysine.

This sequence belongs to the GcvP family. C-terminal subunit subfamily. As to quaternary structure, the glycine cleavage system is composed of four proteins: P, T, L and H. In this organism, the P 'protein' is a heterodimer of two subunits. Pyridoxal 5'-phosphate serves as cofactor.

The enzyme catalyses N(6)-[(R)-lipoyl]-L-lysyl-[glycine-cleavage complex H protein] + glycine + H(+) = N(6)-[(R)-S(8)-aminomethyldihydrolipoyl]-L-lysyl-[glycine-cleavage complex H protein] + CO2. In terms of biological role, the glycine cleavage system catalyzes the degradation of glycine. The P protein binds the alpha-amino group of glycine through its pyridoxal phosphate cofactor; CO(2) is released and the remaining methylamine moiety is then transferred to the lipoamide cofactor of the H protein. This chain is Probable glycine dehydrogenase (decarboxylating) subunit 2, found in Pelodictyon phaeoclathratiforme (strain DSM 5477 / BU-1).